The chain runs to 316 residues: Dof zinc finger protein DOF5.7 (316 aa).

Positions 1 to 42 are disordered; it reads MSSHTNLPSPKPVPKPDHRISGTSQTKKPPSSSVAQDQQNLK. Positions 21–42 are enriched in polar residues; it reads SGTSQTKKPPSSSVAQDQQNLK. The Dof-type zinc-finger motif lies at 41 to 95; it reads LKCPRCNSPNTKFCYYNNYSLSQPRHFCKSCRRYWTRGGALRNVPIGGGCRKTKK. Residues C43, C46, C68, and C71 each contribute to the Zn(2+) site. Disordered stretches follow at residues 92–111 and 257–294; these read KTKK…SSSS and NSSS…NTGG. Residues 101–111 are compositionally biased toward low complexity; that stretch reads SSMNTLPSSSS. Polar residues predominate over residues 257–291; it reads NSSSPSSPTKKGDNQTEWYFGNNSDNEGVISNNAN.

The protein localises to the nucleus. Its function is as follows. Transcription factor that binds specifically to a 5'-AA[AG]G-3' consensus core sequence. This chain is Dof zinc finger protein DOF5.7 (DOF5.7), found in Arabidopsis thaliana (Mouse-ear cress).